We begin with the raw amino-acid sequence, 796 residues long: Protein tyrosine phosphatase domain-containing protein 1 (796 aa).

Positions 126 to 297 constitute a Tyrosine-protein phosphatase domain; the sequence is YSSWVTDNIL…LIPLRNIFSC (172 aa). Cysteine 234 functions as the Phosphocysteine intermediate in the catalytic mechanism. Phosphoserine occurs at positions 435 and 437.

This sequence belongs to the protein-tyrosine phosphatase family. Non-receptor class PTPDC1 subfamily.

May play roles in cilia formation and/or maintenance. This Bos taurus (Bovine) protein is Protein tyrosine phosphatase domain-containing protein 1 (PTPDC1).